The chain runs to 248 residues: Ubiquinone biosynthesis O-methyltransferase (248 aa).

S-adenosyl-L-methionine contacts are provided by Arg-41, Gly-72, Asp-93, and Met-136.

Belongs to the methyltransferase superfamily. UbiG/COQ3 family.

The catalysed reaction is a 3-demethylubiquinol + S-adenosyl-L-methionine = a ubiquinol + S-adenosyl-L-homocysteine + H(+). It catalyses the reaction a 3-(all-trans-polyprenyl)benzene-1,2-diol + S-adenosyl-L-methionine = a 2-methoxy-6-(all-trans-polyprenyl)phenol + S-adenosyl-L-homocysteine + H(+). The protein operates within cofactor biosynthesis; ubiquinone biosynthesis. Its function is as follows. O-methyltransferase that catalyzes the 2 O-methylation steps in the ubiquinone biosynthetic pathway. The chain is Ubiquinone biosynthesis O-methyltransferase from Brucella abortus (strain 2308).